We begin with the raw amino-acid sequence, 334 residues long: Geminin coiled-coil domain-containing protein 1 (334 aa).

Positions Ser-82–Leu-119 form a coiled coil. The disordered stretch occupies residues Phe-143–Lys-167.

Belongs to the GEMC1 family. In terms of processing, highly phosphorylated by CDK2; stimulates initiation of DNA replication.

It localises to the nucleus. In terms of biological role, regulator of DNA replication. Promotes initiation of chromosomal DNA replication by mediating TOPBP1- and CDK2-dependent recruitment of CDC45L onto replication origins. This chain is Geminin coiled-coil domain-containing protein 1 (GMNC), found in Homo sapiens (Human).